The primary structure comprises 338 residues: Probable tRNA pseudouridine synthase B (338 aa).

The Nucleophile role is filled by D78. A PUA domain is found at 245 to 320 (LPKIILRDSA…IAASPIRVLM (76 aa)).

Belongs to the pseudouridine synthase TruB family. Type 2 subfamily.

The enzyme catalyses uridine(55) in tRNA = pseudouridine(55) in tRNA. Could be responsible for synthesis of pseudouridine from uracil-55 in the psi GC loop of transfer RNAs. This is Probable tRNA pseudouridine synthase B from Methanosarcina mazei (strain ATCC BAA-159 / DSM 3647 / Goe1 / Go1 / JCM 11833 / OCM 88) (Methanosarcina frisia).